Here is a 249-residue protein sequence, read N- to C-terminus: 1-(5-phosphoribosyl)-5-[(5-phosphoribosylamino)methylideneamino] imidazole-4-carboxamide isomerase (249 aa).

Asp8 (proton acceptor) is an active-site residue. Asp129 acts as the Proton donor in catalysis.

This sequence belongs to the HisA/HisF family.

It is found in the cytoplasm. It catalyses the reaction 1-(5-phospho-beta-D-ribosyl)-5-[(5-phospho-beta-D-ribosylamino)methylideneamino]imidazole-4-carboxamide = 5-[(5-phospho-1-deoxy-D-ribulos-1-ylimino)methylamino]-1-(5-phospho-beta-D-ribosyl)imidazole-4-carboxamide. It participates in amino-acid biosynthesis; L-histidine biosynthesis; L-histidine from 5-phospho-alpha-D-ribose 1-diphosphate: step 4/9. The sequence is that of 1-(5-phosphoribosyl)-5-[(5-phosphoribosylamino)methylideneamino] imidazole-4-carboxamide isomerase from Rhizobium rhizogenes (strain K84 / ATCC BAA-868) (Agrobacterium radiobacter).